Consider the following 196-residue polypeptide: Late protein I196L (196 aa).

2 tandem repeats follow at residues 28–48 (SNYL…TSSN) and 49–68 (HITT…SSNH). A 3; approximate repeat occupies 69–87 (ITTAISNNITDKDDYTHFS).

This sequence belongs to the asfivirus I196L family.

In Ornithodoros (relapsing fever ticks), this protein is Late protein I196L.